We begin with the raw amino-acid sequence, 131 residues long: Probable lactoylglutathione lyase (131 aa).

The VOC domain maps to 2-126 (FLLHTMIRVG…DGYKIELIQT (125 aa)). His-5 provides a ligand contact to Ni(2+). Residue Arg-9 coordinates substrate. Glu-56 contributes to the Ni(2+) binding site. Substrate contacts are provided by Asn-60 and His-74. Ni(2+) is bound by residues His-74 and Glu-122. Catalysis depends on Glu-122, which acts as the Proton donor/acceptor.

This sequence belongs to the glyoxalase I family. Ni(2+) serves as cofactor.

It catalyses the reaction (R)-S-lactoylglutathione = methylglyoxal + glutathione. Its pathway is secondary metabolite metabolism; methylglyoxal degradation; (R)-lactate from methylglyoxal: step 1/2. Its function is as follows. Catalyzes the conversion of hemimercaptal, formed from methylglyoxal and glutathione, to S-lactoylglutathione. The chain is Probable lactoylglutathione lyase (gloA) from Synechocystis sp. (strain ATCC 27184 / PCC 6803 / Kazusa).